Reading from the N-terminus, the 267-residue chain is UPF0173 metal-dependent hydrolase THEYE_A0282 (267 aa).

Belongs to the UPF0173 family.

The sequence is that of UPF0173 metal-dependent hydrolase THEYE_A0282 from Thermodesulfovibrio yellowstonii (strain ATCC 51303 / DSM 11347 / YP87).